A 69-amino-acid polypeptide reads, in one-letter code: Light-harvesting protein B-870 beta chain (69 aa).

A propeptide spanning residues 1–2 (MA) is cleaved from the precursor. Topologically, residues 3–22 (EVKQESLSGITEGEAKEFHK) are cytoplasmic. A bacteriochlorophyll contacts are provided by His-21 and His-39. A helical transmembrane segment spans residues 23-45 (IFTSSILVFFGVAAFAHLLVWIW). Residues 46–56 (RPWVPGPNGYS) lie on the Periplasmic side of the membrane. Positions 57 to 69 (ALETLTQTLTYLS) are excised as a propeptide.

This sequence belongs to the antenna complex beta subunit family. In terms of assembly, the core complex is formed by different alpha and beta chains, binding bacteriochlorophyll molecules, and arranged most probably in tetrameric structures disposed around the reaction center. The non-pigmented gamma chains may constitute additional components.

The protein resides in the cell inner membrane. Antenna complexes are light-harvesting systems, which transfer the excitation energy to the reaction centers. In Rhodospirillum rubrum (strain ATCC 11170 / ATH 1.1.1 / DSM 467 / LMG 4362 / NCIMB 8255 / S1), this protein is Light-harvesting protein B-870 beta chain.